The following is a 264-amino-acid chain: Thymidylate synthase (264 aa).

Arg-21 contacts dUMP. Residue His-51 coordinates (6R)-5,10-methylene-5,6,7,8-tetrahydrofolate. DUMP is bound at residue 126 to 127; it reads RR. The active-site Nucleophile is Cys-146. Residues 166-169, Asn-177, and 207-209 contribute to the dUMP site; these read RSGD and HLY. Asp-169 serves as a coordination point for (6R)-5,10-methylene-5,6,7,8-tetrahydrofolate. Ala-263 is a binding site for (6R)-5,10-methylene-5,6,7,8-tetrahydrofolate.

This sequence belongs to the thymidylate synthase family. Bacterial-type ThyA subfamily. As to quaternary structure, homodimer.

The protein resides in the cytoplasm. It carries out the reaction dUMP + (6R)-5,10-methylene-5,6,7,8-tetrahydrofolate = 7,8-dihydrofolate + dTMP. Its pathway is pyrimidine metabolism; dTTP biosynthesis. In terms of biological role, catalyzes the reductive methylation of 2'-deoxyuridine-5'-monophosphate (dUMP) to 2'-deoxythymidine-5'-monophosphate (dTMP) while utilizing 5,10-methylenetetrahydrofolate (mTHF) as the methyl donor and reductant in the reaction, yielding dihydrofolate (DHF) as a by-product. This enzymatic reaction provides an intracellular de novo source of dTMP, an essential precursor for DNA biosynthesis. This is Thymidylate synthase from Xanthomonas oryzae pv. oryzae (strain MAFF 311018).